A 203-amino-acid polypeptide reads, in one-letter code: MSTLSPIYSRCATQGNSCPVSTIPEAMAYADPNGTGTIYYRNSEANKAFTCNNASFGNQTNSTAYQCYNGNLPTDFRTAGSSFYENGIPKGWTKCSDENETCDPKVNSDVDILFGADGSYVYSSAKSVPCNINIFGDPKQGVKKACYWRSPLIPINHTPSTPVTPTTPSGTQTTGHKWWVYLLLFGIPLLILIFLIIFFIAKK.

Residues 180–200 (VYLLLFGIPLLILIFLIIFFI) form a helical membrane-spanning segment.

It localises to the virion. The protein localises to the host membrane. This is an uncharacterized protein from Acanthamoeba polyphaga (Amoeba).